The following is a 71-amino-acid chain: Protein bdm (71 aa).

In Escherichia coli (strain K12), this protein is Protein bdm (bdm).